The sequence spans 265 residues: L-histidine 2-aminobutanoyltransferase (265 aa).

This sequence belongs to the methyltransferase superfamily. CntL family.

It carries out the reaction L-histidine + S-adenosyl-L-methionine = (2S)-2-amino-4-{[(1S)-1-carboxy-2-(1H-imidazol-4-yl)ethyl]amino}butanoate + S-methyl-5'-thioadenosine + H(+). Its function is as follows. Catalyzes the nucleophilic attack of one alpha-aminobutanoate moiety from SAM onto L-histidine to produce the intermediate (2S)-2-amino-4-{[(1S)-1-carboxy-2-(1H-imidazol-4-yl)ethyl]amino}butanoate. Functions in the biosynthesis of the metallophore yersinopine, which is involved in metal acquisition and thus enables bacterial growth inside the host, where metal access is limited. Therefore, this enzyme probably contributes to Yersinia virulence. The sequence is that of L-histidine 2-aminobutanoyltransferase from Yersinia pestis.